The sequence spans 592 residues: Hepatocyte nuclear factor 1-alpha-B (592 aa).

The tract at residues 1 to 31 (MASQLSYLQQELLRALLESGVTKEALKKALA) is dimerization. The 32-residue stretch at 1–32 (MASQLSYLQQELLRALLESGVTKEALKKALAD) folds into the HNF-p1 domain. Residues 54–78 (NCVQLPNGLGEPQMSEDESSDDGGD) are disordered. A compositionally biased stretch (acidic residues) spans 67–77 (MSEDESSDDGG). The 96-residue stretch at 85 to 180 (KELERLSPEE…IARQFTHAGH (96 aa)) folds into the POU-specific atypical domain. Interaction with DNA stretches follow at residues 128-130 (QRE), 141-147 (HLSQHLN), 153-156 (KTQK), 201-204 (RFKW), 261-263 (RVY), and 268-271 (NSGK). The short motif at 195 to 203 (KKMRRNRFK) is the Nuclear localization signal element. A DNA-binding region (homeobox; HNF1-type) is located at residues 197-277 (MRRNRFKWGP…NSGKEEAFRH (81 aa)). Composition is skewed to polar residues over residues 284-295 (YNGQQSSAQPLS) and 306-328 (RYTQ…TLSP). Disordered stretches follow at residues 284-329 (YNGQ…LSPS) and 511-533 (KQVV…HNQD).

It belongs to the HNF1 homeobox family. Binds DNA as dimer. Forms a homodimer or heterodimer with HNF1-alpha-A. Potentially also form a heterodimer with HNF1-beta. Liver.

Its subcellular location is the nucleus. Functionally, transcriptional activator that regulates the tissue specific expression of multiple genes, especially in pancreas and liver. Binds to the hepatocyte specific promoter element HP1. Binds to the inverted palindrome 5'-GTTAATNATTAAC-3'. The protein is Hepatocyte nuclear factor 1-alpha-B (hnf1a-b) of Xenopus laevis (African clawed frog).